The following is a 263-amino-acid chain: MLELRLVQGSLLKKVLEAIRELVTDANFDCSGTGFSLQAMDSSHVALVALLLRSEGFEHYRCDRNLSMGMNLNNMAKMLRCAGNDDIITIKADDGSDTVTFMFESPNQDKIADFEMKLMDIDSEHLGIPDSEYQAIVRMPSSEFSRICKDLSSIGDTVIISVTKEGVKFSTAGDIGTANIVCRQNKTVDKPEDATIIEMQEPVSLTFALRYMNSFTKASPLSEQVTISLSSELPVVVEYKIAEMGYIRFYLAPKIEEDEEMKS.

A DNA-binding region spans residues 61–80 (RCDRNLSMGMNLNNMAKMLR).

It belongs to the PCNA family. Homotrimer. Interacts with FEN1A. Interacts with POLL. Interacts with RAD/GEN1. Interacts with DJA7 and DJA8. As to expression, expressed in proliferating tissues. Expressed in roots and root apex. Expressed at low levels in young leaves. Not detected in mature leaves. Highly expressed in shoot apical meristem (SAM). Expressed in flag leaves and panicles.

The protein resides in the nucleus. Functionally, this protein is an auxiliary protein of DNA polymerase delta and is involved in the control of eukaryotic DNA replication by increasing the polymerase's processibility during elongation of the leading strand. This chain is Proliferating cell nuclear antigen, found in Oryza sativa subsp. japonica (Rice).